The sequence spans 344 residues: Uroporphyrinogen decarboxylase (344 aa).

Residues 27–31 (RQAGR), Phe46, Asp77, Tyr153, Thr208, and His324 each bind substrate.

This sequence belongs to the uroporphyrinogen decarboxylase family. Homodimer.

The protein localises to the cytoplasm. It carries out the reaction uroporphyrinogen III + 4 H(+) = coproporphyrinogen III + 4 CO2. Its pathway is porphyrin-containing compound metabolism; protoporphyrin-IX biosynthesis; coproporphyrinogen-III from 5-aminolevulinate: step 4/4. Catalyzes the decarboxylation of four acetate groups of uroporphyrinogen-III to yield coproporphyrinogen-III. This Bradyrhizobium diazoefficiens (strain JCM 10833 / BCRC 13528 / IAM 13628 / NBRC 14792 / USDA 110) protein is Uroporphyrinogen decarboxylase.